Reading from the N-terminus, the 206-residue chain is dTTP/UTP pyrophosphatase (206 aa).

D87 functions as the Proton acceptor in the catalytic mechanism.

Belongs to the Maf family. YhdE subfamily. It depends on a divalent metal cation as a cofactor.

Its subcellular location is the cytoplasm. The enzyme catalyses dTTP + H2O = dTMP + diphosphate + H(+). The catalysed reaction is UTP + H2O = UMP + diphosphate + H(+). Functionally, nucleoside triphosphate pyrophosphatase that hydrolyzes dTTP and UTP. May have a dual role in cell division arrest and in preventing the incorporation of modified nucleotides into cellular nucleic acids. This chain is dTTP/UTP pyrophosphatase, found in Aromatoleum aromaticum (strain DSM 19018 / LMG 30748 / EbN1) (Azoarcus sp. (strain EbN1)).